The primary structure comprises 214 residues: Glucose-6-phosphate isomerase (214 aa).

Fe cation-binding residues include His-92, His-94, Glu-101, and His-140.

It belongs to the archaeal-type GPI family. In terms of assembly, homodimer.

The protein resides in the cytoplasm. It carries out the reaction alpha-D-glucose 6-phosphate = beta-D-fructose 6-phosphate. It participates in carbohydrate degradation; glycolysis; D-glyceraldehyde 3-phosphate and glycerone phosphate from D-glucose: step 2/4. The protein is Glucose-6-phosphate isomerase of Sinorhizobium medicae (strain WSM419) (Ensifer medicae).